We begin with the raw amino-acid sequence, 298 residues long: MPELPEVETVRRGLAPAMEGARVRKLHLGRPDLRFPFPADFAGLIEGKTIISLGRRAKYLLIELEDGLTIVSHLGMSGSFRIEAEKGEGGEAPGAFHYARSKDGKHDHVVFHLDKGEERVCVIYNDPRRFGFMHLVERNKLDLYPAFAELGPEPTGNALSADYLASRFEGKSQPLKSTLLDQKIIAGLGNIYVCEALWRAHLSPLRAAGTLVTTRGKPKAQLIDLTEKIRDVIADAIAAGGSSLRDHIQTDGTLGYFQHSFSVYDQEGQPCRTPGCGGTVERVVQAGRSTFYCAACQK.

The active-site Schiff-base intermediate with DNA is Pro-2. Catalysis depends on Glu-3, which acts as the Proton donor. The active-site Proton donor; for beta-elimination activity is the Lys-58. 3 residues coordinate DNA: His-106, Arg-128, and Lys-171. Residues 262-298 (SVYDQEGQPCRTPGCGGTVERVVQAGRSTFYCAACQK) form an FPG-type zinc finger. The Proton donor; for delta-elimination activity role is filled by Arg-288.

This sequence belongs to the FPG family. In terms of assembly, monomer. Zn(2+) is required as a cofactor.

It catalyses the reaction Hydrolysis of DNA containing ring-opened 7-methylguanine residues, releasing 2,6-diamino-4-hydroxy-5-(N-methyl)formamidopyrimidine.. It carries out the reaction 2'-deoxyribonucleotide-(2'-deoxyribose 5'-phosphate)-2'-deoxyribonucleotide-DNA = a 3'-end 2'-deoxyribonucleotide-(2,3-dehydro-2,3-deoxyribose 5'-phosphate)-DNA + a 5'-end 5'-phospho-2'-deoxyribonucleoside-DNA + H(+). In terms of biological role, involved in base excision repair of DNA damaged by oxidation or by mutagenic agents. Acts as a DNA glycosylase that recognizes and removes damaged bases. Has a preference for oxidized purines, such as 7,8-dihydro-8-oxoguanine (8-oxoG). Has AP (apurinic/apyrimidinic) lyase activity and introduces nicks in the DNA strand. Cleaves the DNA backbone by beta-delta elimination to generate a single-strand break at the site of the removed base with both 3'- and 5'-phosphates. The chain is Formamidopyrimidine-DNA glycosylase (mutM) from Agrobacterium fabrum (strain C58 / ATCC 33970) (Agrobacterium tumefaciens (strain C58)).